The following is a 2234-amino-acid chain: Bridge-like lipid transfer protein family member 2 (2234 aa).

The N-terminal stretch at 1-31 (MPLFLSALLVLLLVALSALFLGRWLVVRLAT) is a signal peptide. The segment at 29-108 (LATRWCQRKL…LQKVSSLSAP (80 aa)) is transmembrane domain. Ser-563 carries the phosphoserine modification. The disordered stretch occupies residues 1496 to 1529 (QMSAKKPKRGIPPSAQVPPHVSTPSFSGRPDKGS). The stretch at 1814–1885 (ILHLQEAVRQ…LNILIRCFKD (72 aa)) forms a coiled coil. Phosphoserine occurs at positions 1846 and 2090.

Belongs to the SABRE family.

It is found in the cell membrane. It localises to the endoplasmic reticulum membrane. Its subcellular location is the mitochondrion membrane. Tube-forming lipid transport protein which binds to phosphatidylinositols and affects phosphatidylinositol-4,5-bisphosphate (PtdIns-4,5-P2) distribution. This Mus musculus (Mouse) protein is Bridge-like lipid transfer protein family member 2 (Bltp2).